A 748-amino-acid polypeptide reads, in one-letter code: MEDVRRRNRGHPLLRSKKRGEGYNHGFSPSQIQSLAVICQTFLPPETTSEQQAVNSFHVASSTQPPFTDEVAEMIVKNGRSEAVKVLRIILMILSFRFGTLLLCGSLCLDKSWPFVLKFSQLPLDKREAILRNWSRQSGFLLPFRITFFLAKFYTLFYFFSQTDENLKNPALEAIGYCIDGTERSSNKKSEADEKRRPLEKGIIETMHESDVTITQSLTEKGVHVARDDGDNVYRIRCDAVVVGSGSGGGVAAANLAKAGLKVLVLEKGNYFTAHDYSGLEVPSMLELYEKGGLLTTVDGKFMLLAGSAVGGGTAVNWSASIRTPDHVLQEWSEGSKIKFFGSQEYQSAMDEVTIRIGVTERCVKHGFQNQVLRKGCERLGLQVESVPRNSPEDHYCGLCGYGCRAGAKNGTDQTWLVDAVENGAVILTGIKAERFVLVDNTSSSNERKKRCVGVFASSVGGKIGKKFIIEARVTVSSAGSLLTPPLMLSSGLKNPNIGRNLKLHPVLMTWGYFPEKDSEFSGKMYEGGIITSVHHMNDTESGCKAILENPLIGPASYAGLSPWVSGPDLKERMIKYGRTAHLFALVRDLGSGEVMMENEVTYRTTKKDRENLRAGLRQALRVSVAAGAVEVGTYRSDGQKMKCEAITKEAMEEFLDEVDAVGGVGTKGEYWTTYFSAHQMGSCRMGVTAEEGALDENGESWEAEGLFVCDGSILPSAVGVNPMITIQSTAYCISSKIVDSLQNKTKV.

Residues 1–18 (MEDVRRRNRGHPLLRSKK) are compositionally biased toward basic residues. The interval 1–25 (MEDVRRRNRGHPLLRSKKRGEGYNH) is disordered. Helical transmembrane passes span 89–109 (IILM…SLCL) and 140–160 (FLLP…FYFF). Residue 238–253 (CDAVVVGSGSGGGVAA) coordinates FAD. His679 functions as the Proton acceptor in the catalytic mechanism.

It belongs to the GMC oxidoreductase family.

It localises to the membrane. It catalyses the reaction a long-chain primary fatty alcohol + O2 = a long-chain fatty aldehyde + H2O2. Functionally, long-chain fatty alcohol oxidase involved in the omega-oxidation pathway of lipid degradation. This is Long-chain-alcohol oxidase FAO4B (FAO4B) from Arabidopsis thaliana (Mouse-ear cress).